We begin with the raw amino-acid sequence, 142 residues long: Putative transmembrane protein INAFM1 (142 aa).

Residues 1-19 show a composition bias toward gly residues; the sequence is MRGTSCVGGGAESPGGAGL. The interval 1 to 22 is disordered; that stretch reads MRGTSCVGGGAESPGGAGLSEG. Residues 36 to 56 traverse the membrane as a helical segment; it reads YFLCVSLAAVLLAVYYGLIWV. Disordered regions lie at residues 61 to 83 and 99 to 142; these read PAAP…PGVP and VPGG…RRPG. A compositionally biased stretch (pro residues) spans 64-83; that stretch reads PAGPQPSAPSPPCAARPGVP. Low complexity predominate over residues 99-111; it reads VPGGPRPQLQLPL. The segment covering 117–142 has biased composition (basic and acidic residues); the sequence is YSDPDRRPSRQTPRETPEAAEGRRPG.

Its subcellular location is the membrane. This is Putative transmembrane protein INAFM1 from Homo sapiens (Human).